A 249-amino-acid chain; its full sequence is tRNA (guanine-N(1)-)-methyltransferase (249 aa).

Residues glycine 113 and 133-138 (LGDFVL) contribute to the S-adenosyl-L-methionine site.

It belongs to the RNA methyltransferase TrmD family. In terms of assembly, homodimer.

The protein localises to the cytoplasm. It carries out the reaction guanosine(37) in tRNA + S-adenosyl-L-methionine = N(1)-methylguanosine(37) in tRNA + S-adenosyl-L-homocysteine + H(+). Specifically methylates guanosine-37 in various tRNAs. This is tRNA (guanine-N(1)-)-methyltransferase from Leptothrix cholodnii (strain ATCC 51168 / LMG 8142 / SP-6) (Leptothrix discophora (strain SP-6)).